A 260-amino-acid chain; its full sequence is Deoxycytidine kinase (260 aa).

Ser11 and Ser15 each carry phosphoserine; by CK1. ATP is bound at residue 28–36; sequence GNIAAGKST. Glu53 provides a ligand contact to substrate. Phosphothreonine; by CK1 is present on Thr72. Ser74 carries the phosphoserine; by CK1 modification. Tyr86 and Gln97 together coordinate substrate. Glu127 acts as the Proton acceptor in catalysis. Arg128 and Asp133 together coordinate substrate. 188–192 provides a ligand contact to ATP; the sequence is RIYLR. Glu197 contacts substrate. 240–242 contacts ATP; sequence EDF.

This sequence belongs to the DCK/DGK family. As to quaternary structure, homodimer. Phosphorylated and activated in vitro upon phosphorylation at Ser-74 by CSNK1D/CK1.

Its subcellular location is the nucleus. It catalyses the reaction 2'-deoxycytidine + a ribonucleoside 5'-triphosphate = dCMP + a ribonucleoside 5'-diphosphate + H(+). The catalysed reaction is 2'-deoxyadenosine + ATP = dAMP + ADP + H(+). It carries out the reaction 2'-deoxyguanosine + ATP = dGMP + ADP + H(+). Functionally, phosphorylates the deoxyribonucleosides deoxycytidine, deoxyguanosine and deoxyadenosine. This is Deoxycytidine kinase (DCK) from Bos taurus (Bovine).